The chain runs to 802 residues: Osmosensitive cation channel TMEM63C (802 aa).

The Extracellular segment spans residues 1 to 35 (MSAFPDSMDQKFHNMTVNECFQSRSTVLQGQPFGG). The chain crosses the membrane as a helical span at residues 36-60 (IPTVLVLNIILWVFVVLLYSFLRKA). Residues 61 to 124 (AWDYGRLALL…RDRDLINKCG (64 aa)) lie on the Cytoplasmic side of the membrane. Residues Ser-75 and Ser-78 each carry the phosphoserine modification. The chain crosses the membrane as a helical span at residues 125-157 (DDARIYITFQYHLIIFVLILCIPSLGIILPVNY). At 158–180 (IGTVLDWNSHFGRTTIVNVSTES) the chain is on the extracellular side. A helical transmembrane segment spans residues 181–205 (KFLWLHSLFAFLYFLINLAFMGHHC). At 206–401 (LGFVPKKSLH…IIWKHLSIRR (196 aa)) the chain is on the cytoplasmic side. The chain crosses the membrane as a helical span at residues 402-431 (FSWWTRFIAINTFLFFLFFFLTTPAIIINT). Residues 432-446 (IDIYNVTRPIEKLQS) are Extracellular-facing. Residues 447–476 (PIVTQFFPSVLLWAFTVTMPLLVYLSAFLE) form a helical membrane-spanning segment. Over 477–480 (AHWT) the chain is Cytoplasmic. A helical transmembrane segment spans residues 481-517 (RSSQNLIIVHKCYIFLVFMVVILPSMGLTSLHVFLRW). Residues 518–540 (LFDIYYLEHATIRFQCVFLPDNG) are Extracellular-facing. The chain crosses the membrane as a helical span at residues 541–573 (AFFINYVITAALLGTGMELMRLGSLCTYCTRLF). Topologically, residues 574 to 593 (LSKSEPERVHIRKNQATDFQ) are cytoplasmic. The helical transmembrane segment at 594–612 (FGREYAWMLNVFSVVMAYS) threads the bilayer. At 613–615 (ITC) the chain is on the extracellular side. Residues 616–640 (PIIVPFGLLYLCMKHITDRYNMYYS) traverse the membrane as a helical segment. At 641–647 (YAPTKLN) the chain is on the cytoplasmic side. The helical transmembrane segment at 648–676 (AQIHMAAVYQAIFAPLLGLFWMLFFSILR) threads the bilayer. Residues 677-681 (VGSLH) lie on the Extracellular side of the membrane. Residues 682–702 (SITLFSMSSLIISVVIAFSGV) form a helical membrane-spanning segment. Over 703-802 (FLGKLRIAQR…EGLEMEGQSH (100 aa)) the chain is Cytoplasmic. A disordered region spans residues 753-785 (TPASSPARHTYGTINSQPEEGEEESGLRGFARE).

The protein belongs to the CSC1 (TC 1.A.17) family. Monomer.

It localises to the endoplasmic reticulum membrane. It is found in the cell membrane. The enzyme catalyses Ca(2+)(in) = Ca(2+)(out). Acts as an osmosensitive cation channel preferentially activated upon hypotonic stress. In contrast to TMEM63B, does not show phospholipid scramblase activity. Enriched in mitochondria-ER contact sites where it may regulate the metabolite flux and organelles' morphologies in response to osmotic changes. In particular may regulate mitochondrial motility and function in motor neuron axons. Required for the functional integrity of the kidney glomerular filtration barrier. In Mus musculus (Mouse), this protein is Osmosensitive cation channel TMEM63C.